A 459-amino-acid chain; its full sequence is Serine protease HTRA3 (459 aa).

The first 23 residues, 1 to 23, serve as a signal peptide directing secretion; it reads MQARALLPATLATLATLAVSVLA. The region spanning 27–90 is the IGFBP N-terminal domain; that stretch reads PAAPCPARCD…ECVRGVCRCR (64 aa). 8 cysteine pairs are disulfide-bonded: C31–C54, C35–C56, C40–C57, C45–C60, C68–C82, C76–C87, C89–C107, and C96–C132. The 59-residue stretch at 76 to 134 folds into the Kazal-like domain; it reads CGDSLECVRGVCRCRWTHTVCGTDGHTYADVCALQAASRRALQISGTPVRQLQKGACPS. The segment at 181–346 is serine protease; it reads GSGFIMSEAG…AIPSDRITRF (166 aa). Active-site charge relay system residues include H197, D233, and S311. The PDZ domain occupies 365-450; the sequence is IRMRTITPSL…EVRRGNDDLL (86 aa).

The protein belongs to the peptidase S1C family. As to quaternary structure, homotrimer. Interacts with TGFB1; the interaction inhibits TGFB-mediated signaling. Interacts with BMP4; the interaction inhibits BMP4-mediated signaling. Interacts with TGFB2, GDF5 and MYH9. As to expression, expressed in the ovary, essentially in granulosa cells in a follicle-stage specific manner. Highest levels found in large luteinizing granulosa cells.

It localises to the secreted. Its function is as follows. Serine protease that cleaves beta-casein/CSN2 as well as several extracellular matrix (ECM) proteoglycans such as decorin/DCN, biglycan/BGN and fibronectin/FN1. Inhibits signaling mediated by TGF-beta family proteins possibly indirectly by degradation of these ECM proteoglycans. May act as a tumor suppressor. Negatively regulates, in vitro, trophoblast invasion during placental development and may be involved in the development of the placenta in vivo. May also have a role in ovarian development, granulosa cell differentiation and luteinization. The protein is Serine protease HTRA3 (Htra3) of Rattus norvegicus (Rat).